The sequence spans 429 residues: MSFDSLPALPLDPLPDAALPTAPRRRQTVSVNVGGVMVGSAHPIVVQSMTNTDTANAEATAIQVAQLARAGSEIVRVTVNTREAAAAVPELVQRLADIGVHVPIVGDFHYNGHLLLREYPETARLLAKYRINPGNVGAGQRHDENFATMIEVAKEFDKPVRIGVNWGSLDQQVLARLMDENAAAGHPKSPTDVTIDAMIVSALDSARFAEELGLGHDKILISVKVSSAPELWQVYRQLAPLCDYPLHLGLTEAGMGMKGIVASSVALAPLLTEGIGDTIRVSLTPEPGAPRKLEVEVAQQILQSLGLRQFLPQVTSCPGCGRTTSSFFQTLAQKIQDFIRESMPEWKAKYPGVEDMQVAVMGCVVNGPGESKHANIGISLPGTGEDPRAPVYQDGKLLTTLKGPRIAEEFQELLEKYVEERYGQGVAQG.

[4Fe-4S] cluster-binding residues include Cys-317, Cys-320, Cys-363, and Glu-370.

Belongs to the IspG family. The cofactor is [4Fe-4S] cluster.

It catalyses the reaction (2E)-4-hydroxy-3-methylbut-2-enyl diphosphate + oxidized [flavodoxin] + H2O + 2 H(+) = 2-C-methyl-D-erythritol 2,4-cyclic diphosphate + reduced [flavodoxin]. It functions in the pathway isoprenoid biosynthesis; isopentenyl diphosphate biosynthesis via DXP pathway; isopentenyl diphosphate from 1-deoxy-D-xylulose 5-phosphate: step 5/6. Converts 2C-methyl-D-erythritol 2,4-cyclodiphosphate (ME-2,4cPP) into 1-hydroxy-2-methyl-2-(E)-butenyl 4-diphosphate. The protein is 4-hydroxy-3-methylbut-2-en-1-yl diphosphate synthase (flavodoxin) of Deinococcus radiodurans (strain ATCC 13939 / DSM 20539 / JCM 16871 / CCUG 27074 / LMG 4051 / NBRC 15346 / NCIMB 9279 / VKM B-1422 / R1).